Here is a 458-residue protein sequence, read N- to C-terminus: tRNA modification GTPase MnmE (458 aa).

The (6S)-5-formyl-5,6,7,8-tetrahydrofolate site is built by Arg-22, Glu-84, and Arg-123. Residues 220–379 (GIATAIIGRP…LEKAIADLFF (160 aa)) form the TrmE-type G domain. Asn-230 contacts K(+). GTP contacts are provided by residues 230–235 (NVGKSS), 249–255 (TDIAGTT), and 274–277 (DTAG). Ser-234 provides a ligand contact to Mg(2+). 3 residues coordinate K(+): Thr-249, Ile-251, and Thr-254. Thr-255 serves as a coordination point for Mg(2+). Lys-458 contributes to the (6S)-5-formyl-5,6,7,8-tetrahydrofolate binding site.

Belongs to the TRAFAC class TrmE-Era-EngA-EngB-Septin-like GTPase superfamily. TrmE GTPase family. In terms of assembly, homodimer. Heterotetramer of two MnmE and two MnmG subunits. It depends on K(+) as a cofactor.

The protein localises to the cytoplasm. In terms of biological role, exhibits a very high intrinsic GTPase hydrolysis rate. Involved in the addition of a carboxymethylaminomethyl (cmnm) group at the wobble position (U34) of certain tRNAs, forming tRNA-cmnm(5)s(2)U34. This is tRNA modification GTPase MnmE from Bacillus anthracis.